The following is a 248-amino-acid chain: Mannose-binding protein C (248 aa).

Positions 1–20 are cleaved as a signal peptide; sequence MSLFPSLTLLLLSVVATSYS. Residues 42-99 form the Collagen-like domain; that stretch reads GINGFPGKDGRDGTKGEKGEPGQGLRGLQGPPGKLGPPGNPGSSGSPGPKGQKGDPGE. A disordered region spans residues 43-111; sequence INGFPGKDGR…DCESSLAASE (69 aa). Pro47 is modified (4-hydroxyproline). Positions 49–61 are enriched in basic and acidic residues; the sequence is KDGRDGTKGEKGE. Residues Pro73, Pro79, Pro82, and Pro88 each carry the 4-hydroxyproline modification. A compositionally biased stretch (low complexity) spans 82–91; that stretch reads PGSSGSPGPK. Residues 112–130 are a coiled coil; the sequence is RKALQTEMARIKKWLTFSL. The C-type lectin domain maps to 134–245; the sequence is VGNKFFLTNG…CSSSHLALCE (112 aa). 2 cysteine pairs are disulfide-bonded: Cys155–Cys244 and Cys222–Cys236.

Oligomeric complex of 3 or more homotrimers. Interacts with MASP1 and MASP2. Interacts with MEP1A and MEP1B and may inhibit their catalytic activity. Post-translationally, hydroxylation on proline residues within the sequence motif, GXPG, is most likely to be 4-hydroxy as this fits the requirement for 4-hydroxylation in vertebrates.

It localises to the secreted. Functionally, calcium-dependent lectin involved in innate immune defense. Binds mannose, fucose and N-acetylglucosamine on different microorganisms and activates the lectin complement pathway. Binds to late apoptotic cells, as well as to apoptotic blebs and to necrotic cells, but not to early apoptotic cells, facilitating their uptake by macrophages. In Macaca fascicularis (Crab-eating macaque), this protein is Mannose-binding protein C (MBL2).